We begin with the raw amino-acid sequence, 668 residues long: Acyl-CoA-binding domain-containing protein 4 (668 aa).

The ACB domain maps to 12–106 (YPERFYAAAS…LEEDDPGWYS (95 aa)). Residues K33, 48 to 52 (YALYQ), and K74 each bind an acyl-CoA. 6 Kelch repeats span residues 195–242 (KMYI…TLLA), 255–305 (KLLS…MVGK), 307–356 (LVIF…VHAE), 358–407 (FLLI…TIGE), 408–456 (NWFI…LVVS), and 463–508 (VLVA…VNNA). 2 positions are modified to phosphoserine: S515 and S520. The stretch at 538 to 647 (KVEGNSERII…EQAAMNAKRQ (110 aa)) forms a coiled coil. The interval 639–668 (QAAMNAKRQGSGGVWGWLAGSPQEKDDDSP) is disordered.

The protein belongs to the ACBP family. Interacts with RAP2-3/EBP, an ethylene-responsive element binding protein. Mostly expressed in roots, stems, and leaves, and, to a lower extent, in flowers and siliques.

It is found in the cytoplasm. Functionally, binds medium- and long-chain acyl-CoA esters with very high affinity. Can interact in vitro with oleoyl-CoA, barely with palmitoyl-CoA, but not with arachidonyl-CoA. May function as an intracellular carrier of acyl-CoA esters. Plays a role in the biosynthesis of membrane lipids including galactolipids and phospholipids. The protein is Acyl-CoA-binding domain-containing protein 4 (ACBP4) of Arabidopsis thaliana (Mouse-ear cress).